Reading from the N-terminus, the 1779-residue chain is 5-methyl-1-naphthoate synthase (1779 aa).

Residues 10 to 433 (VEPLAVIGMS…GSIAHAVLQQ (424 aa)) form the Ketosynthase family 3 (KS3) domain. Catalysis depends on for beta-ketoacyl synthase activity residues Cys181, His316, and His356. Residues 902-1027 (HTLIGARTTV…ATVVHEPEVG (126 aa)) form an N-terminal hotdog fold region. The region spanning 902 to 1180 (HTLIGARTTV…YVKVQDIGSG (279 aa)) is the PKS/mFAS DH domain. Residues 1042-1180 (PVSWTWAKVD…YVKVQDIGSG (139 aa)) form a C-terminal hotdog fold region. One can recognise a Carrier domain in the interval 1664-1742 (GELPELVLKV…ALAEFLAAEV (79 aa)). Ser1702 carries the post-translational modification O-(pantetheine 4'-phosphoryl)serine. The tract at residues 1746–1771 (TADAEETDPVAGLPAPQQGSGTAEQL) is disordered.

It carries out the reaction 5 malonyl-CoA + acetyl-CoA + 3 NADPH + 7 H(+) = 5-methyl-1-naphthoate + 5 CO2 + 3 NADP(+) + 6 CoA + 4 H2O. Its pathway is antibiotic biosynthesis. Functionally, polyketide synthase that catalyzes the biosynthesis of the bicyclic aromatic compound 5-methyl-1-naphthoate in the biosynthesis of the antitumor antibiotic azinomycin B. In Streptomyces sahachiroi, this protein is 5-methyl-1-naphthoate synthase.